The chain runs to 63 residues: Probable rubredoxin (63 aa).

A Rubredoxin-like domain is found at Met11–Leu62. Residues Cys16, Cys19, Cys49, and Cys52 each contribute to the Fe cation site.

The protein belongs to the rubredoxin family. The cofactor is Fe(3+).

In terms of biological role, rubredoxin is a small nonheme, iron protein lacking acid-labile sulfide. Its single Fe, chelated to 4 Cys, functions as an electron acceptor and may also stabilize the conformation of the molecule. This chain is Probable rubredoxin, found in Methanothermobacter thermautotrophicus (strain ATCC 29096 / DSM 1053 / JCM 10044 / NBRC 100330 / Delta H) (Methanobacterium thermoautotrophicum).